Here is a 112-residue protein sequence, read N- to C-terminus: Hydrogenase maturation factor HypA (112 aa).

H2 contacts Ni(2+). Zn(2+) contacts are provided by C72, C75, C88, and C91.

It belongs to the HypA/HybF family.

Involved in the maturation of [NiFe] hydrogenases. Required for nickel insertion into the metal center of the hydrogenase. The protein is Hydrogenase maturation factor HypA of Francisella philomiragia subsp. philomiragia (strain ATCC 25017 / CCUG 19701 / FSC 153 / O#319-036).